The primary structure comprises 62 residues: UPF0434 protein RHE_CH03977 (62 aa).

Belongs to the UPF0434 family.

The chain is UPF0434 protein RHE_CH03977 from Rhizobium etli (strain ATCC 51251 / DSM 11541 / JCM 21823 / NBRC 15573 / CFN 42).